Here is a 293-residue protein sequence, read N- to C-terminus: Elongation factor Ts (293 aa).

The interval 80–83 (TDFV) is involved in Mg(2+) ion dislocation from EF-Tu.

This sequence belongs to the EF-Ts family.

It is found in the cytoplasm. Functionally, associates with the EF-Tu.GDP complex and induces the exchange of GDP to GTP. It remains bound to the aminoacyl-tRNA.EF-Tu.GTP complex up to the GTP hydrolysis stage on the ribosome. The chain is Elongation factor Ts from Burkholderia vietnamiensis (strain G4 / LMG 22486) (Burkholderia cepacia (strain R1808)).